The sequence spans 176 residues: Disulfide bond formation protein B (176 aa).

Over 1–14 (MLRFLNQCSQGRGA) the chain is Cytoplasmic. A helical membrane pass occupies residues 15–31 (WLLMAFTALALELTALW). Residues 32-49 (FQHVMLLKPCVLCIYERC) lie on the Periplasmic side of the membrane. A disulfide bridge connects residues Cys-41 and Cys-44. The helical transmembrane segment at 50-65 (ALFGVLGAALIGAIAP) threads the bilayer. Over 66–71 (KTPLRY) the chain is Cytoplasmic. Residues 72 to 89 (VAMVIWLYSAFRGVQLTY) traverse the membrane as a helical segment. Residues 90–144 (EHTMLQLYPSPFATCDFMVRFPEWLPLDKWVPQVFVASGDCAERQWDFLGMEMPQ) are Periplasmic-facing. Cys-104 and Cys-130 are disulfide-bonded. Residues 145–163 (WLLGIFIAYLIVAVLVVIS) form a helical membrane-spanning segment. At 164–176 (QPFKAKKRDLFGR) the chain is on the cytoplasmic side.

It belongs to the DsbB family.

It localises to the cell inner membrane. Its function is as follows. Required for disulfide bond formation in some periplasmic proteins such as PhoA or OmpA. Acts by oxidizing the DsbA protein. The protein is Disulfide bond formation protein B of Shigella flexneri.